We begin with the raw amino-acid sequence, 146 residues long: Large ribosomal subunit protein uL15 (146 aa).

Residues 1–10 (MTLKLHDLRP) are compositionally biased toward basic and acidic residues. A disordered region spans residues 1–41 (MTLKLHDLRPARGSKIARTRVGRGDGSKGKTAGRGTKGTRA).

The protein belongs to the universal ribosomal protein uL15 family. Part of the 50S ribosomal subunit.

Its function is as follows. Binds to the 23S rRNA. The sequence is that of Large ribosomal subunit protein uL15 from Mycobacterium tuberculosis (strain ATCC 25177 / H37Ra).